The primary structure comprises 763 residues: High glucose sensor RGT2 (763 aa).

The interval 1–28 (MNDSQNCLRQREENSHLNPGNDFGHHQG) is disordered. Topologically, residues 1–99 (MNDSQNCLRQ…PLPLRSNVMS (99 aa)) are cytoplasmic. Residues 100 to 120 (VLVGIFVAVGGFLFGYDTGLI) traverse the membrane as a helical segment. The Extracellular segment spans residues 121–144 (NSITDMPYVKTYIAPNHSYFTTSQ). N136 is a glycosylation site (N-linked (GlcNAc...) asparagine). The chain crosses the membrane as a helical span at residues 145–165 (IAILVSFLSLGTFFGALIAPY). The Cytoplasmic segment spans residues 166–175 (ISDSYGRKPT). The helical transmembrane segment at 176-196 (IMFSTAVIFSIGNSLQVASGG) threads the bilayer. L197 is a topological domain (extracellular). Residues 198 to 218 (VLLIVGRVISGIGIGIISAVV) traverse the membrane as a helical segment. Topologically, residues 219–231 (PLYQAEAAQKNLR) are cytoplasmic. Residues 232-252 (GAIISSYQWAITIGLLVSSAV) form a helical membrane-spanning segment. Over 253–266 (SQGTHSKNGPSSYR) the chain is Extracellular. Residues 267 to 287 (IPIGLQYVWSSILAVGMIFLP) form a helical membrane-spanning segment. Residues 288–357 (ESPRYYVLKD…SENRPKQILR (70 aa)) are Cytoplasmic-facing. The helical transmembrane segment at 358-378 (IFTGIAIQAFQQASGINFIFY) threads the bilayer. The Extracellular segment spans residues 379-393 (YGVNFFNNTGVDNSY). The N-linked (GlcNAc...) asparagine glycan is linked to N385. A helical transmembrane segment spans residues 394–414 (LVSFISYAVNVAFSIPGMYLV). Residues 415–421 (DRIGRRP) lie on the Cytoplasmic side of the membrane. Residues 422–442 (VLLAGGVIMAIANLVIAIVGV) traverse the membrane as a helical segment. At 443–452 (SEGKTVVASK) the chain is on the extracellular side. The helical transmembrane segment at 453-473 (IMIAFICLFIAAFSATWGGVV) threads the bilayer. Over 474–491 (WVVSAELYPLGVRSKCTA) the chain is Cytoplasmic. The chain crosses the membrane as a helical span at residues 492–512 (ICAAANWLVNFTCALITPYIV). Residues 513–524 (DVGSHTSSMGPK) are Extracellular-facing. A helical membrane pass occupies residues 525–545 (IFFIWGGLNVVAVIVVYFAVY). The Cytoplasmic segment spans residues 546–763 (ETRGLTLEEI…SKHSQYTSPQ (218 aa)). The segment covering 725–737 (SSTTSNDTSFSPS) has biased composition (low complexity). Residues 725–763 (SSTTSNDTSFSPSHNSNARTSSNWTSDLASKHSQYTSPQ) are disordered. Over residues 738–763 (HNSNARTSSNWTSDLASKHSQYTSPQ) the composition is skewed to polar residues.

Belongs to the major facilitator superfamily. Sugar transporter (TC 2.A.1.1) family. Interacts with YCK1. Interacts with MTH1 and STD1. Phosphorylated in the C-terminal tail on Yck consensus sites in a yeast casein kinases YCK1 and YCK2 (Yck)-dependent manner. This phosphorylation is required for interaction with HXT corepressors MTH1 and STD1 and ultimately HXT expression.

Its subcellular location is the cell membrane. Its function is as follows. Low-affinity high glucose sensor that is part of the sensor/receptor-repressor (SSR) glucose-signaling pathway, which detects extracellular glucose and induces expression of glucose transporters that bring glucose into the cell. The transporter-like sensor generates an intracellular signal in the presence of high levels of glucose to promote high glucose-induced expression of HXT1. Binding of glucose to the RGT2 transmembrane domain activates a downstream signaling cascade, leading to phosphorylation of the RGT1 corepressors MTH1 and STD1, targeting them for SCF(Grr1)-dependent ubiquitination and degradation. Depletion of the corepressors robs RGT1 of its ability to repress expression of HXT genes, leading to accumulation of glucose transporters in the plasma membrane. Even though RGT2 is similar to glucose transporters, it appears to be unable to transport glucose. This is High glucose sensor RGT2 from Saccharomyces cerevisiae (strain ATCC 204508 / S288c) (Baker's yeast).